Reading from the N-terminus, the 126-residue chain is Large ribosomal subunit protein bL12 (126 aa).

It belongs to the bacterial ribosomal protein bL12 family. Homodimer. Part of the ribosomal stalk of the 50S ribosomal subunit. Forms a multimeric L10(L12)X complex, where L10 forms an elongated spine to which 2 to 4 L12 dimers bind in a sequential fashion. Binds GTP-bound translation factors.

Its function is as follows. Forms part of the ribosomal stalk which helps the ribosome interact with GTP-bound translation factors. Is thus essential for accurate translation. The protein is Large ribosomal subunit protein bL12 of Chlorobaculum parvum (strain DSM 263 / NCIMB 8327) (Chlorobium vibrioforme subsp. thiosulfatophilum).